Reading from the N-terminus, the 363-residue chain is UDP-N-acetylenolpyruvoylglucosamine reductase (363 aa).

The region spanning 25-201 is the FAD-binding PCMH-type domain; the sequence is IGPVARRMLT…RSAPVRYREL (177 aa). Arg-168 is a catalytic residue. Ser-249 serves as the catalytic Proton donor. The active site involves Glu-352.

The protein belongs to the MurB family. FAD serves as cofactor.

Its subcellular location is the cytoplasm. The catalysed reaction is UDP-N-acetyl-alpha-D-muramate + NADP(+) = UDP-N-acetyl-3-O-(1-carboxyvinyl)-alpha-D-glucosamine + NADPH + H(+). Its pathway is cell wall biogenesis; peptidoglycan biosynthesis. Functionally, cell wall formation. This Mycolicibacterium smegmatis (strain ATCC 700084 / mc(2)155) (Mycobacterium smegmatis) protein is UDP-N-acetylenolpyruvoylglucosamine reductase.